The sequence spans 418 residues: Probable cysteine desulfurase 2 (418 aa).

Lys234 carries the post-translational modification N6-(pyridoxal phosphate)lysine. The Cysteine persulfide intermediate role is filled by Cys374.

The protein belongs to the class-V pyridoxal-phosphate-dependent aminotransferase family. Csd subfamily. Pyridoxal 5'-phosphate is required as a cofactor.

The catalysed reaction is (sulfur carrier)-H + L-cysteine = (sulfur carrier)-SH + L-alanine. In terms of biological role, catalyzes the removal of elemental sulfur and selenium atoms from L-cysteine, L-cystine, L-selenocysteine, and L-selenocystine to produce L-alanine. This chain is Probable cysteine desulfurase 2 (csd2), found in Mycobacterium leprae (strain TN).